We begin with the raw amino-acid sequence, 148 residues long: Large ribosomal subunit protein bL9 (148 aa).

Belongs to the bacterial ribosomal protein bL9 family.

Its function is as follows. Binds to the 23S rRNA. The chain is Large ribosomal subunit protein bL9 from Pseudomonas putida (strain W619).